A 199-amino-acid polypeptide reads, in one-letter code: 3-isopropylmalate dehydratase small subunit (199 aa).

It belongs to the LeuD family. LeuD type 1 subfamily. In terms of assembly, heterodimer of LeuC and LeuD.

The catalysed reaction is (2R,3S)-3-isopropylmalate = (2S)-2-isopropylmalate. It functions in the pathway amino-acid biosynthesis; L-leucine biosynthesis; L-leucine from 3-methyl-2-oxobutanoate: step 2/4. Its function is as follows. Catalyzes the isomerization between 2-isopropylmalate and 3-isopropylmalate, via the formation of 2-isopropylmaleate. The chain is 3-isopropylmalate dehydratase small subunit from Aeromonas hydrophila subsp. hydrophila (strain ATCC 7966 / DSM 30187 / BCRC 13018 / CCUG 14551 / JCM 1027 / KCTC 2358 / NCIMB 9240 / NCTC 8049).